We begin with the raw amino-acid sequence, 242 residues long: Type III pantothenate kinase (242 aa).

ATP is bound at residue Asp6–Lys13. Substrate-binding positions include Tyr90 and Gly97–Arg100. Catalysis depends on Asp99, which acts as the Proton acceptor. Residue Thr122 coordinates ATP. Residue Thr172 coordinates substrate.

It belongs to the type III pantothenate kinase family. In terms of assembly, homodimer. It depends on NH4(+) as a cofactor. Requires K(+) as cofactor.

It localises to the cytoplasm. The enzyme catalyses (R)-pantothenate + ATP = (R)-4'-phosphopantothenate + ADP + H(+). Its pathway is cofactor biosynthesis; coenzyme A biosynthesis; CoA from (R)-pantothenate: step 1/5. In terms of biological role, catalyzes the phosphorylation of pantothenate (Pan), the first step in CoA biosynthesis. This chain is Type III pantothenate kinase, found in Aromatoleum aromaticum (strain DSM 19018 / LMG 30748 / EbN1) (Azoarcus sp. (strain EbN1)).